The primary structure comprises 644 residues: Fidgetin-like protein 2 (644 aa).

Disordered regions lie at residues Met-1–Pro-36 and Ala-285–Gly-323. Residues Pro-10–Ser-27 show a composition bias toward polar residues. The segment covering Ala-285–Ala-294 has biased composition (low complexity). Residues Ala-390 and Gly-430–Leu-435 each bind ATP.

This sequence belongs to the AAA ATPase family. The cofactor is Mg(2+).

It is found in the cytoplasm. It localises to the cell cortex. The catalysed reaction is ATP + H2O = ADP + phosphate + H(+). Functionally, microtubule-severing enzyme that negatively regulates cell migration and wound healing. In migrating cells, targets dynamic microtubules (MTs) at the leading edge and severs them, thereby suppressing motility. Microtubule severing releases ARHGEF2 which activates RHOA, which in turn regulates focal ahesion turnover via focal adhesion kinase, as opposed to F-actin polymerization, to suppress cell motility. Negative regulator of axon regeneration that suppresses axonal growth by selectively severing dynamic MTs in the distal axon shaft and growth cone. Contributes to proper cell branching during endothelial and neuronal development. The chain is Fidgetin-like protein 2 (Fignl2) from Mus musculus (Mouse).